The primary structure comprises 289 residues: Right origin-binding protein (289 aa).

Residues 8–106 enclose the HTH araC/xylS-type domain; that stretch reads RDLLIWLEGH…AQTPALYRRS (99 aa). 2 DNA-binding regions (H-T-H motif) span residues 25–46 and 73–96; these read DNVA…KDVT and ILDI…KKQF.

Transcriptional regulator. Binds to the right arm of the replication origin oriC of the chromosome. Rob binding may influence the formation of the nucleoprotein structure, required for oriC function in the initiation of replication. The chain is Right origin-binding protein (rob) from Escherichia coli O157:H7.